A 214-amino-acid chain; its full sequence is LexA repressor (214 aa).

A DNA-binding region (H-T-H motif) is located at residues 26 to 46 (VREIGEAVGLSSSSTVHSYLK). Active-site for autocatalytic cleavage activity residues include S138 and K175.

The protein belongs to the peptidase S24 family. Homodimer.

It carries out the reaction Hydrolysis of Ala-|-Gly bond in repressor LexA.. Functionally, represses a number of genes involved in the response to DNA damage (SOS response), including recA and lexA. In the presence of single-stranded DNA, RecA interacts with LexA causing an autocatalytic cleavage which disrupts the DNA-binding part of LexA, leading to derepression of the SOS regulon and eventually DNA repair. This is LexA repressor from Desulforamulus reducens (strain ATCC BAA-1160 / DSM 100696 / MI-1) (Desulfotomaculum reducens).